We begin with the raw amino-acid sequence, 487 residues long: Virulence sensor histidine kinase PhoQ (487 aa).

At 1–16 (MNKFARHFLPLSLRVR) the chain is on the cytoplasmic side. The chain crosses the membrane as a helical span at residues 17–37 (FLLATAGVVLVLSLAYGIVAL). At 38–193 (VGYSVSFDKT…ELKRSYMVWS (156 aa)) the chain is on the periplasmic side. The a divalent metal cation site is built by Asp-151 and Asp-152. The helical transmembrane segment at 194 to 214 (WFVYVLAANLLLVIPLLWIAA) threads the bilayer. The region spanning 215 to 266 (WWSLRPIEALAREVRELEDHHREMLNPETTRELTSLVRNLNQLLKSERERYN) is the HAMP domain. Over 215–487 (WWSLRPIEAL…GRQHPTQKEE (273 aa)) the chain is Cytoplasmic. A Histidine kinase domain is found at 274–481 (DLTHSLKTPL…RMEVVFGRQH (208 aa)). His-277 is modified (phosphohistidine; by autocatalysis). A Mg(2+)-binding site is contributed by Asn-386. Residues 386–394 (NVLDNACKY), 416–421 (DDGPGI), and 435–447 (RADT…GVGL) contribute to the ATP site. Position 443 (Gln-443) interacts with Mg(2+).

Homodimer.

It is found in the cell inner membrane. The enzyme catalyses ATP + protein L-histidine = ADP + protein N-phospho-L-histidine.. Functionally, member of the two-component regulatory system PhoP/PhoQ which regulates the expression of genes involved in virulence and resistance to host defense antimicrobial peptides. In low periplasmic Mg(2+), PhoQ functions as a membrane-associated protein kinase that undergoes autophosphorylation and subsequently transfers the phosphate to PhoP, which results in the expression of PhoP-activated genes (PAG) and repression of PhoP-repressed genes (PRG). In high periplasmic Mg(2+), acts as a protein phosphatase that dephosphorylates phospho-PhoP, which results in the repression of PAG and may lead to expression of some PRG. The chain is Virulence sensor histidine kinase PhoQ (phoQ) from Salmonella paratyphi A (strain ATCC 9150 / SARB42).